We begin with the raw amino-acid sequence, 207 residues long: MDNEKGLLIVLSGPSGVGKGTVRKKIFDDPSTSYKYSISMTTRDKRQGEVDGVDYFFKAKSEFEELIKQDQFIEYAEYVGNYYGTPVQYVKDTMDRGYDVFLEIEVEGAKQVRKKFPDALFIFLAPPSLDHLRERLVGRGTESSEKIQSRVHEARKEVEMMNLYDYVVVNDEVELAKQRIQSIVEAEHLKRERIEAKYRKMILEAKK.

The 180-residue stretch at 6–185 folds into the Guanylate kinase-like domain; it reads GLLIVLSGPS…AKQRIQSIVE (180 aa). Position 13-20 (13-20) interacts with ATP; sequence GPSGVGKG.

It belongs to the guanylate kinase family.

It localises to the cytoplasm. The catalysed reaction is GMP + ATP = GDP + ADP. Functionally, essential for recycling GMP and indirectly, cGMP. The chain is Guanylate kinase from Staphylococcus saprophyticus subsp. saprophyticus (strain ATCC 15305 / DSM 20229 / NCIMB 8711 / NCTC 7292 / S-41).